The primary structure comprises 73 residues: Translation initiation factor IF-1 (73 aa).

An S1-like domain is found at 1–73 (MSKKKDVIEM…TRGRITYRYK (73 aa)).

The protein belongs to the IF-1 family. In terms of assembly, component of the 30S ribosomal translation pre-initiation complex which assembles on the 30S ribosome in the order IF-2 and IF-3, IF-1 and N-formylmethionyl-tRNA(fMet); mRNA recruitment can occur at any time during PIC assembly.

It is found in the cytoplasm. Functionally, one of the essential components for the initiation of protein synthesis. Stabilizes the binding of IF-2 and IF-3 on the 30S subunit to which N-formylmethionyl-tRNA(fMet) subsequently binds. Helps modulate mRNA selection, yielding the 30S pre-initiation complex (PIC). Upon addition of the 50S ribosomal subunit IF-1, IF-2 and IF-3 are released leaving the mature 70S translation initiation complex. The sequence is that of Translation initiation factor IF-1 from Chloroflexus aurantiacus (strain ATCC 29366 / DSM 635 / J-10-fl).